Here is a 210-residue protein sequence, read N- to C-terminus: Peroxiredoxin-5, mitochondrial (210 aa).

The transit peptide at 1–48 (MLQLGLRVLGCKASSVLRASTCLAGRAGRKEAGWECGGARSFSSSAVT) directs the protein to the mitochondrion. One can recognise a Thioredoxin domain in the interval 52 to 210 (IKVGDAIPSV…SLAPNILSQL (159 aa)). The residue at position 70 (Lys70) is an N6-acetyllysine; alternate. Lys70 is subject to N6-succinyllysine; alternate. Lys71 carries the post-translational modification N6-acetyllysine. At Lys79 the chain carries N6-acetyllysine; alternate. Lys79 carries the post-translational modification N6-succinyllysine; alternate. Cys96 acts as the Cysteine sulfenic acid (-SOH) intermediate in catalysis. Cys96 carries the S-palmitoyl cysteine lipid modification. The cysteines at positions 96 and 200 are disulfide-linked. N6-succinyllysine is present on Lys112. 2 positions are modified to phosphoserine: Ser167 and Ser178. The Microbody targeting signal motif lies at 208–210 (SQL).

This sequence belongs to the peroxiredoxin family. Prx5 subfamily. In terms of assembly, monomer. In terms of processing, S-palmitoylated. Palmitoylation occurs on the active site, inhibiting its reactivity; therefore PRDX5 palmitoylation status determines its antioxidant capacity. Post-translationally, S-palmitoylated. Depalmitoylated by ABHD10. As to expression, widely expressed.

It is found in the mitochondrion. It localises to the cytoplasm. The protein resides in the peroxisome matrix. The enzyme catalyses a hydroperoxide + [thioredoxin]-dithiol = an alcohol + [thioredoxin]-disulfide + H2O. Its function is as follows. Thiol-specific peroxidase that catalyzes the reduction of hydrogen peroxide and organic hydroperoxides to water and alcohols, respectively. Plays a role in cell protection against oxidative stress by detoxifying peroxides and as sensor of hydrogen peroxide-mediated signaling events. The protein is Peroxiredoxin-5, mitochondrial of Mus musculus (Mouse).